The primary structure comprises 368 residues: tRNA-specific 2-thiouridylase MnmA (368 aa).

ATP-binding positions include 11-18 (GMSGGVDS) and methionine 37. Residues 97–99 (NPD) form an interaction with target base in tRNA region. The active-site Nucleophile is cysteine 102. Cysteine 102 and cysteine 199 are disulfide-bonded. Residue glycine 127 coordinates ATP. The interval 149-151 (KDQ) is interaction with tRNA. Residue cysteine 199 is the Cysteine persulfide intermediate of the active site. Residues 311–312 (RY) are interaction with tRNA.

It belongs to the MnmA/TRMU family. In terms of assembly, interacts with TusE.

The protein localises to the cytoplasm. It catalyses the reaction S-sulfanyl-L-cysteinyl-[protein] + uridine(34) in tRNA + AH2 + ATP = 2-thiouridine(34) in tRNA + L-cysteinyl-[protein] + A + AMP + diphosphate + H(+). Its function is as follows. Catalyzes the 2-thiolation of uridine at the wobble position (U34) of tRNA(Lys), tRNA(Glu) and tRNA(Gln), leading to the formation of s(2)U34, the first step of tRNA-mnm(5)s(2)U34 synthesis. Sulfur is provided by IscS, via a sulfur-relay system. Binds ATP and its substrate tRNAs. This chain is tRNA-specific 2-thiouridylase MnmA, found in Shigella boydii serotype 4 (strain Sb227).